We begin with the raw amino-acid sequence, 265 residues long: S-adenosylmethionine decarboxylase proenzyme (265 aa).

S114 acts as the Schiff-base intermediate with substrate; via pyruvic acid in catalysis. S114 is subject to Pyruvic acid (Ser); by autocatalysis. H119 (proton acceptor; for processing activity) is an active-site residue. C142 functions as the Proton donor; for catalytic activity in the catalytic mechanism.

Belongs to the prokaryotic AdoMetDC family. Type 2 subfamily. In terms of assembly, heterooctamer of four alpha and four beta chains arranged as a tetramer of alpha/beta heterodimers. The cofactor is pyruvate. Is synthesized initially as an inactive proenzyme. Formation of the active enzyme involves a self-maturation process in which the active site pyruvoyl group is generated from an internal serine residue via an autocatalytic post-translational modification. Two non-identical subunits are generated from the proenzyme in this reaction, and the pyruvate is formed at the N-terminus of the alpha chain, which is derived from the carboxyl end of the proenzyme. The post-translation cleavage follows an unusual pathway, termed non-hydrolytic serinolysis, in which the side chain hydroxyl group of the serine supplies its oxygen atom to form the C-terminus of the beta chain, while the remainder of the serine residue undergoes an oxidative deamination to produce ammonia and the pyruvoyl group blocking the N-terminus of the alpha chain.

The enzyme catalyses S-adenosyl-L-methionine + H(+) = S-adenosyl 3-(methylsulfanyl)propylamine + CO2. It participates in amine and polyamine biosynthesis; S-adenosylmethioninamine biosynthesis; S-adenosylmethioninamine from S-adenosyl-L-methionine: step 1/1. In terms of biological role, catalyzes the decarboxylation of S-adenosylmethionine to S-adenosylmethioninamine (dcAdoMet), the propylamine donor required for the synthesis of the polyamines spermine and spermidine from the diamine putrescine. The sequence is that of S-adenosylmethionine decarboxylase proenzyme from Buchnera aphidicola subsp. Acyrthosiphon pisum (strain 5A).